Here is a 400-residue protein sequence, read N- to C-terminus: CCA-adding enzyme (400 aa).

Residues G28 and R31 each coordinate ATP. Residues G28 and R31 each coordinate CTP. Mg(2+)-binding residues include D41 and D43. ATP is bound by residues R112, D155, R158, R161, and R164. CTP is bound by residues R112, D155, R158, R161, and R164.

The protein belongs to the tRNA nucleotidyltransferase/poly(A) polymerase family. Bacterial CCA-adding enzyme type 3 subfamily. As to quaternary structure, homodimer. It depends on Mg(2+) as a cofactor.

The catalysed reaction is a tRNA precursor + 2 CTP + ATP = a tRNA with a 3' CCA end + 3 diphosphate. It carries out the reaction a tRNA with a 3' CCA end + 2 CTP + ATP = a tRNA with a 3' CCACCA end + 3 diphosphate. Its function is as follows. Catalyzes the addition and repair of the essential 3'-terminal CCA sequence in tRNAs without using a nucleic acid template. Adds these three nucleotides in the order of C, C, and A to the tRNA nucleotide-73, using CTP and ATP as substrates and producing inorganic pyrophosphate. tRNA 3'-terminal CCA addition is required both for tRNA processing and repair. Also involved in tRNA surveillance by mediating tandem CCA addition to generate a CCACCA at the 3' terminus of unstable tRNAs. While stable tRNAs receive only 3'-terminal CCA, unstable tRNAs are marked with CCACCA and rapidly degraded. This Staphylococcus aureus (strain MSSA476) protein is CCA-adding enzyme.